A 108-amino-acid polypeptide reads, in one-letter code: UPF0145 protein Fnod_0426 (108 aa).

It belongs to the UPF0145 family.

This Fervidobacterium nodosum (strain ATCC 35602 / DSM 5306 / Rt17-B1) protein is UPF0145 protein Fnod_0426.